Reading from the N-terminus, the 267-residue chain is Deoxyribose-phosphate aldolase (267 aa).

Asp-123 serves as the catalytic Proton donor/acceptor. The active-site Schiff-base intermediate with acetaldehyde is Lys-185. The active-site Proton donor/acceptor is Lys-217.

This sequence belongs to the DeoC/FbaB aldolase family. DeoC type 1 subfamily.

The protein localises to the cytoplasm. The enzyme catalyses 2-deoxy-D-ribose 5-phosphate = D-glyceraldehyde 3-phosphate + acetaldehyde. The protein operates within carbohydrate degradation; 2-deoxy-D-ribose 1-phosphate degradation; D-glyceraldehyde 3-phosphate and acetaldehyde from 2-deoxy-alpha-D-ribose 1-phosphate: step 2/2. Catalyzes a reversible aldol reaction between acetaldehyde and D-glyceraldehyde 3-phosphate to generate 2-deoxy-D-ribose 5-phosphate. This is Deoxyribose-phosphate aldolase from Coccidioides immitis (strain RS) (Valley fever fungus).